Reading from the N-terminus, the 512-residue chain is Anaerobic nitric oxide reductase transcription regulator NorR (512 aa).

In terms of domain architecture, Sigma-54 factor interaction spans 190–419 (MIGESLAMQE…LEHVISRAAV (230 aa)). ATP is bound by residues 218 to 225 (GETGVGKE) and 281 to 290 (ADNGTLFLDE). The segment at residues 487-506 (WAATARALQLDTGNLHRLAK) is a DNA-binding region (H-T-H motif).

It functions in the pathway nitrogen metabolism; nitric oxide reduction. In terms of biological role, required for the expression of anaerobic nitric oxide (NO) reductase, acts as a transcriptional activator for at least the norVW operon. Activation also requires sigma-54. The polypeptide is Anaerobic nitric oxide reductase transcription regulator NorR (Aliivibrio fischeri (strain ATCC 700601 / ES114) (Vibrio fischeri)).